A 312-amino-acid chain; its full sequence is Olfactory receptor 8H3 (312 aa).

Residues Met-1–Met-26 are Extracellular-facing. N-linked (GlcNAc...) asparagine glycosylation is present at Asn-6. The chain crosses the membrane as a helical span at residues Ala-27–Leu-47. Over Leu-48–Gln-55 the chain is Cytoplasmic. A helical membrane pass occupies residues Leu-56–Thr-76. Residues Val-77–Ala-99 are Extracellular-facing. The cysteines at positions 97 and 189 are disulfide-linked. The chain crosses the membrane as a helical span at residues Gln-100–Tyr-120. Over Asp-121–Arg-139 the chain is Cytoplasmic. The helical transmembrane segment at Leu-140 to Val-160 threads the bilayer. Residues Val-161–Met-197 are Extracellular-facing. The helical transmembrane segment at Leu-198 to Ser-217 threads the bilayer. Residues Tyr-218–Ala-237 are Cytoplasmic-facing. A helical transmembrane segment spans residues Phe-238–Thr-258. At Tyr-259–Asp-271 the chain is on the extracellular side. Residues Gln-272–Leu-292 traverse the membrane as a helical segment. At Arg-293 to Arg-312 the chain is on the cytoplasmic side.

The protein belongs to the G-protein coupled receptor 1 family.

The protein resides in the cell membrane. Functionally, odorant receptor. This Homo sapiens (Human) protein is Olfactory receptor 8H3 (OR8H3).